Consider the following 315-residue polypeptide: DNA-directed RNA polymerase subunit alpha (315 aa).

The segment at 1 to 228 (MLEIEKPKIE…EHLRLFIGLT (228 aa)) is alpha N-terminal domain (alpha-NTD). An alpha C-terminal domain (alpha-CTD) region spans residues 245 to 315 (KDKILEMTIE…LGLGFRKADD (71 aa)).

The protein belongs to the RNA polymerase alpha chain family. Homodimer. The RNAP catalytic core consists of 2 alpha, 1 beta, 1 beta' and 1 omega subunit. When a sigma factor is associated with the core the holoenzyme is formed, which can initiate transcription.

The catalysed reaction is RNA(n) + a ribonucleoside 5'-triphosphate = RNA(n+1) + diphosphate. In terms of biological role, DNA-dependent RNA polymerase catalyzes the transcription of DNA into RNA using the four ribonucleoside triphosphates as substrates. In Desulfitobacterium hafniense (strain DSM 10664 / DCB-2), this protein is DNA-directed RNA polymerase subunit alpha.